The chain runs to 307 residues: Protein phosphatase PTC7 homolog fig (307 aa).

The PPM-type phosphatase domain maps to 41 to 300 (VQGSSKDQQL…DDITVILASV (260 aa)). Mn(2+)-binding residues include aspartate 77, glycine 78, and aspartate 222.

Belongs to the PP2C family. Mg(2+) serves as cofactor. Requires Mn(2+) as cofactor.

It catalyses the reaction O-phospho-L-seryl-[protein] + H2O = L-seryl-[protein] + phosphate. The enzyme catalyses O-phospho-L-threonyl-[protein] + H2O = L-threonyl-[protein] + phosphate. The sequence is that of Protein phosphatase PTC7 homolog fig from Drosophila grimshawi (Hawaiian fruit fly).